We begin with the raw amino-acid sequence, 356 residues long: GTPase Obg (356 aa).

Residues 1–158 (MFIDSVKITL…RLVRLELKLI (158 aa)) enclose the Obg domain. In terms of domain architecture, OBG-type G spans 159–339 (ADVGLVGFPN…LKFMLLEEIK (181 aa)). GTP-binding positions include 165 to 172 (GFPNVGKS), 190 to 194 (FTTLT), 212 to 215 (DIPG), 280 to 283 (SKSD), and 320 to 322 (SSL). Residues Ser-172 and Thr-192 each coordinate Mg(2+).

This sequence belongs to the TRAFAC class OBG-HflX-like GTPase superfamily. OBG GTPase family. As to quaternary structure, monomer. Mg(2+) is required as a cofactor.

It is found in the cytoplasm. An essential GTPase which binds GTP, GDP and possibly (p)ppGpp with moderate affinity, with high nucleotide exchange rates and a fairly low GTP hydrolysis rate. Plays a role in control of the cell cycle, stress response, ribosome biogenesis and in those bacteria that undergo differentiation, in morphogenesis control. In Campylobacter jejuni subsp. jejuni serotype O:23/36 (strain 81-176), this protein is GTPase Obg.